Consider the following 89-residue polypeptide: Barrier-to-autointegration factor (89 aa).

An N-acetylmethionine modification is found at Met-1. At Thr-2 the chain carries N-acetylthreonine; in Barrier-to-autointegration factor, N-terminally processed. 2 positions are modified to phosphothreonine; by VRK1 and VRK2: Thr-2 and Thr-3. Ser-4 is modified (phosphoserine; by VRK1 and VRK2). Residues 20–35 enclose the HhH domain; the sequence is VGSLAGIGDVLSKRLE.

This sequence belongs to the BAF family. In terms of assembly, homodimer. Heterodimerizes with BANF2. Interacts with ANKLE2/LEM4, leading to decreased phosphorylation by VRK1 and promoting dephosphorylation by protein phosphatase 2A (PP2A). Binds non-specifically to double-stranded DNA, and is found as a hexamer or dodecamer upon DNA binding. Binds to LEM domain-containing nuclear proteins such as LEMD3/MAN1, TMPO/LAP2 and EMD (emerin). Interacts with ANKLE1 (via LEM domain); the interaction may favor BANF1 dimerization. Interacts with CRX and LMNA (lamin-A). Binds linker histone H1.1 and core histones H3. Interacts with LEMD2 (via LEM domain). Interacts with PARP1; interaction takes place in response to oxidative DNA damage. Post-translationally, ser-4 is the major site of phosphorylation as compared to Thr-2 and Thr-3. Phosphorylation on Thr-2; Thr-3 and Ser-4 disrupts its ability to bind DNA and reduces its ability to bind LEM domain-containing proteins. Non phosphorylated BAF seems to enhance binding between EMD and LMNA. Dephosphorylated by protein phosphatase 2A (PP2A) following interaction with ANKLE2/LEM4 during mitotic exit, leading to mitotic nuclear envelope reassembly.

The protein resides in the nucleus. It localises to the chromosome. It is found in the nucleus envelope. Its subcellular location is the cytoplasm. Non-specific DNA-binding protein that plays key roles in mitotic nuclear reassembly, chromatin organization, DNA damage response, gene expression and intrinsic immunity against foreign DNA. Contains two non-specific double-stranded DNA (dsDNA)-binding sites which promote DNA cross-bridging. Plays a key role in nuclear membrane reformation at the end of mitosis by driving formation of a single nucleus in a spindle-independent manner. Transiently cross-bridges anaphase chromosomes via its ability to bridge distant DNA sites, leading to the formation of a dense chromatin network at the chromosome ensemble surface that limits membranes to the surface. Also acts as a negative regulator of innate immune activation by restricting CGAS activity toward self-DNA upon acute loss of nuclear membrane integrity. Outcompetes CGAS for DNA-binding, thereby preventing CGAS activation and subsequent damaging autoinflammatory responses. Also involved in DNA damage response: interacts with PARP1 in response to oxidative stress, thereby inhibiting the ADP-ribosyltransferase activity of PARP1. Involved in the recognition of exogenous dsDNA in the cytosol: associates with exogenous dsDNA immediately after its appearance in the cytosol at endosome breakdown and is required to avoid autophagy. This is Barrier-to-autointegration factor from Mus musculus (Mouse).